Here is a 108-residue protein sequence, read N- to C-terminus: UPF0060 membrane protein Ent638_1931 (108 aa).

The next 4 membrane-spanning stretches (helical) occupy residues 6 to 26 (LLFF…WLWL), 29 to 49 (GASV…VWLL), 61 to 81 (AAYG…VDGV), and 85 to 105 (AYDW…VAGW).

Belongs to the UPF0060 family.

Its subcellular location is the cell inner membrane. The protein is UPF0060 membrane protein Ent638_1931 of Enterobacter sp. (strain 638).